A 340-amino-acid polypeptide reads, in one-letter code: Holliday junction branch migration complex subunit RuvB (340 aa).

Residues 1-181 are large ATPase domain (RuvB-L); it reads MDRIVEIEKA…FGMQFRLNFY (181 aa). ATP is bound by residues Leu20, Arg21, Gly62, Lys65, Thr66, Thr67, 128–130, Arg171, Tyr181, and Arg218; that span reads EDF. Thr66 contributes to the Mg(2+) binding site. The segment at 182 to 252 is small ATPAse domain (RuvB-S); sequence TSDELAKIVQ…RAKSSLDALG (71 aa). The tract at residues 255–340 is head domain (RuvB-H); the sequence is DLGFDEMDLK…TQKGLFDEDQ (86 aa). DNA contacts are provided by Arg309 and Arg314.

This sequence belongs to the RuvB family. As to quaternary structure, homohexamer. Forms an RuvA(8)-RuvB(12)-Holliday junction (HJ) complex. HJ DNA is sandwiched between 2 RuvA tetramers; dsDNA enters through RuvA and exits via RuvB. An RuvB hexamer assembles on each DNA strand where it exits the tetramer. Each RuvB hexamer is contacted by two RuvA subunits (via domain III) on 2 adjacent RuvB subunits; this complex drives branch migration. In the full resolvosome a probable DNA-RuvA(4)-RuvB(12)-RuvC(2) complex forms which resolves the HJ.

The protein localises to the cytoplasm. The catalysed reaction is ATP + H2O = ADP + phosphate + H(+). In terms of biological role, the RuvA-RuvB-RuvC complex processes Holliday junction (HJ) DNA during genetic recombination and DNA repair, while the RuvA-RuvB complex plays an important role in the rescue of blocked DNA replication forks via replication fork reversal (RFR). RuvA specifically binds to HJ cruciform DNA, conferring on it an open structure. The RuvB hexamer acts as an ATP-dependent pump, pulling dsDNA into and through the RuvAB complex. RuvB forms 2 homohexamers on either side of HJ DNA bound by 1 or 2 RuvA tetramers; 4 subunits per hexamer contact DNA at a time. Coordinated motions by a converter formed by DNA-disengaged RuvB subunits stimulates ATP hydrolysis and nucleotide exchange. Immobilization of the converter enables RuvB to convert the ATP-contained energy into a lever motion, pulling 2 nucleotides of DNA out of the RuvA tetramer per ATP hydrolyzed, thus driving DNA branch migration. The RuvB motors rotate together with the DNA substrate, which together with the progressing nucleotide cycle form the mechanistic basis for DNA recombination by continuous HJ branch migration. Branch migration allows RuvC to scan DNA until it finds its consensus sequence, where it cleaves and resolves cruciform DNA. This Campylobacter hominis (strain ATCC BAA-381 / DSM 21671 / CCUG 45161 / LMG 19568 / NCTC 13146 / CH001A) protein is Holliday junction branch migration complex subunit RuvB.